The chain runs to 447 residues: D-ribitol-5-phosphate cytidylyltransferase (447 aa).

It belongs to the IspD/TarI cytidylyltransferase family. IspD subfamily. In terms of assembly, homodimer.

The protein localises to the cytoplasm. The protein resides in the cytosol. It carries out the reaction D-ribitol 5-phosphate + CTP + H(+) = CDP-L-ribitol + diphosphate. The catalysed reaction is D-ribose 5-phosphate + CTP + H(+) = CDP-D-ribose + diphosphate. The enzyme catalyses D-ribulose 5-phosphate + CTP + H(+) = CDP-D-ribulose + diphosphate. The protein operates within protein modification; protein glycosylation. Functionally, cytidylyltransferase required for protein O-linked mannosylation. Catalyzes the formation of CDP-ribitol nucleotide sugar from D-ribitol 5-phosphate. CDP-ribitol is a substrate of FKTN during the biosynthesis of the phosphorylated O-mannosyl trisaccharide (N-acetylgalactosamine-beta-3-N-acetylglucosamine-beta-4-(phosphate-6-)mannose), a carbohydrate structure present in alpha-dystroglycan (DAG1), which is required for binding laminin G-like domain-containing extracellular proteins with high affinity. Shows activity toward other pentose phosphate sugars and mediates formation of CDP-ribulose or CDP-ribose using CTP and ribulose-5-phosphate or ribose-5-phosphate, respectively. Not involved in dolichol production. This chain is D-ribitol-5-phosphate cytidylyltransferase (Crppa), found in Rattus norvegicus (Rat).